The chain runs to 333 residues: GTPase Obg (333 aa).

Residues 1 to 158 form the Obg domain; that stretch reads MFIDSAKIYV…RNIDLELKLL (158 aa). Positions 121 to 143 are disordered; the sequence is HGGKGNQHFATPTNRAPRYSEPA. The region spanning 159-323 is the OBG-type G domain; that stretch reads ADIGLVGFPN…LKDVLWRIIQ (165 aa). GTP contacts are provided by residues 165–172, 190–194, 212–215, 279–282, and 304–306; these read GFPNAGKS, FTTLE, DIPG, SKMD, and SSV. Ser172 and Thr192 together coordinate Mg(2+).

Belongs to the TRAFAC class OBG-HflX-like GTPase superfamily. OBG GTPase family. Monomer. It depends on Mg(2+) as a cofactor.

The protein localises to the cytoplasm. An essential GTPase which binds GTP, GDP and possibly (p)ppGpp with moderate affinity, with high nucleotide exchange rates and a fairly low GTP hydrolysis rate. Plays a role in control of the cell cycle, stress response, ribosome biogenesis and in those bacteria that undergo differentiation, in morphogenesis control. This chain is GTPase Obg, found in Chloroherpeton thalassium (strain ATCC 35110 / GB-78).